The sequence spans 349 residues: Probable G-protein coupled receptor 21 (349 aa).

Topologically, residues 1–32 are extracellular; the sequence is MNSTWDGNQSSHPFCLLALGYLETVRFCLLEV. 2 N-linked (GlcNAc...) asparagine glycosylation sites follow: Asn2 and Asn8. A helical membrane pass occupies residues 33–53; that stretch reads LIIVFLTVLIISGNIIVIFVF. Residues 54 to 75 are Cytoplasmic-facing; sequence HCAPLLNHHSTSYFIQTMAYAD. Residues 76-96 form a helical membrane-spanning segment; sequence LLVGVSCLVPSLSLLYYPLPI. Topologically, residues 97-104 are extracellular; sequence EEAMTCQV. The chain crosses the membrane as a helical span at residues 105-125; sequence FGFVVSVLKSISMASLACISI. Topologically, residues 126–147 are cytoplasmic; sequence DRYIAITKPLTYNTLVTPWRLR. The helical transmembrane segment at 148–168 threads the bilayer; that stretch reads LCIFLIWLYSTLVFLPSFFHW. Residues 169 to 191 lie on the Extracellular side of the membrane; the sequence is GKPGYHGDVFQWCAESWHTNSYF. Residues 192 to 212 traverse the membrane as a helical segment; the sequence is TLFIVMMLYAPAALIVCFTYF. At 213 to 252 the chain is on the cytoplasmic side; the sequence is NIFRICQQHTKEISERQARFSSQNGETGEPQTCPDKRYAM. Residues 253–273 form a helical membrane-spanning segment; sequence VLFRITSVFYVLWLPYIIYFL. The Extracellular segment spans residues 274-283; that stretch reads LESSTGCSSR. The helical transmembrane segment at 284–304 threads the bilayer; sequence LASFLTTWLAISNSFCNCIIY. Residues 305-349 are Cytoplasmic-facing; that stretch reads SLSNSVFQRGLKGLSGSLCTSCASHTTAKDPYTVRCKGPPNGSHI.

The protein belongs to the G-protein coupled receptor 1 family.

The protein localises to the cell membrane. In terms of biological role, orphan receptor. This is Probable G-protein coupled receptor 21 (Gpr21) from Mus musculus (Mouse).